A 173-amino-acid chain; its full sequence is Ribosome maturation factor RimM (173 aa).

One can recognise a PRC barrel domain in the interval 98–171; that stretch reads DDQYYYDEII…LITIDALEGL (74 aa).

Belongs to the RimM family. In terms of assembly, binds ribosomal protein uS19.

Its subcellular location is the cytoplasm. In terms of biological role, an accessory protein needed during the final step in the assembly of 30S ribosomal subunit, possibly for assembly of the head region. Essential for efficient processing of 16S rRNA. May be needed both before and after RbfA during the maturation of 16S rRNA. It has affinity for free ribosomal 30S subunits but not for 70S ribosomes. The polypeptide is Ribosome maturation factor RimM (Leuconostoc mesenteroides subsp. mesenteroides (strain ATCC 8293 / DSM 20343 / BCRC 11652 / CCM 1803 / JCM 6124 / NCDO 523 / NBRC 100496 / NCIMB 8023 / NCTC 12954 / NRRL B-1118 / 37Y)).